The primary structure comprises 209 residues: MLGRPKFVLASGSPRRLSLLNQAGIEPDALRPADVDETPKRGELPRACANRLARAKADAALKSVQLDDELRGAFILSADTVVAVGRRILPKANLVDEAAQCLRLLSGRNHRVYTAICLVTPREAFRQRLVETRVRFKRLSEDDIQAYIGSGEWRGKAGGYAVQGIAGSFVVKMVGSYSNVVGLPLYETTTLLGGEGFPIRFGWLNATAV.

D79 serves as the catalytic Proton acceptor.

It belongs to the Maf family. YhdE subfamily. A divalent metal cation is required as a cofactor.

It is found in the cytoplasm. The catalysed reaction is dTTP + H2O = dTMP + diphosphate + H(+). It catalyses the reaction UTP + H2O = UMP + diphosphate + H(+). Nucleoside triphosphate pyrophosphatase that hydrolyzes dTTP and UTP. May have a dual role in cell division arrest and in preventing the incorporation of modified nucleotides into cellular nucleic acids. The protein is dTTP/UTP pyrophosphatase of Bradyrhizobium diazoefficiens (strain JCM 10833 / BCRC 13528 / IAM 13628 / NBRC 14792 / USDA 110).